Here is a 155-residue protein sequence, read N- to C-terminus: Aspartate carbamoyltransferase regulatory chain (155 aa).

Zn(2+)-binding residues include Cys113, Cys118, Cys139, and Cys142.

This sequence belongs to the PyrI family. As to quaternary structure, contains catalytic and regulatory chains. The cofactor is Zn(2+).

In terms of biological role, involved in allosteric regulation of aspartate carbamoyltransferase. This is Aspartate carbamoyltransferase regulatory chain from Methanospirillum hungatei JF-1 (strain ATCC 27890 / DSM 864 / NBRC 100397 / JF-1).